Reading from the N-terminus, the 105-residue chain is Flower-specific defensin (105 aa).

The signal sequence occupies residues 1–25 (MARSLCFMAFAILAMMLFVAYEVQA). 4 disulfides stabilise this stretch: cysteine 28–cysteine 72, cysteine 39–cysteine 59, cysteine 45–cysteine 66, and cysteine 49–cysteine 68. Positions 73-105 (VFDEKMTKTGAEILAEEAKTLAAALLEEEIMDN) are cleaved as a propeptide — removed in mature form.

It belongs to the DEFL family. In terms of tissue distribution, most abundant in the epidermal cell layers of the petals and sepals, within the connective cells of the anthers, and the cortical cells of the style. Not detected in the tapetum, pollen mother cells, the transmitting tissue, the vascular bundles of the anther and style or in leaves. Expressed also in ovaries, but barley detectable in roots.

It localises to the secreted. It is found in the vacuole. In terms of biological role, plant defense peptide with antifungal activity against F.oxysporum and B.cinerea. Retards the growth of the Lepidopteran insect pests H.armigera and H.punctigera. The chain is Flower-specific defensin (D1) from Nicotiana alata (Winged tobacco).